The sequence spans 2187 residues: Nascent polypeptide-associated complex subunit alpha, muscle-specific form (2187 aa).

3 disordered regions span residues Met-1–Gln-20, Leu-32–Phe-73, and Ile-172–Ala-196. Positions Val-9 to Gln-20 are enriched in polar residues. Residues Lys-178–Leu-192 show a composition bias toward polar residues. Arg-247 is modified (asymmetric dimethylarginine). Disordered regions lie at residues Asp-335 to Lys-370, Asn-579 to Val-611, Pro-738 to Thr-835, Lys-884 to Lys-1847, and Pro-1892 to Ser-2053. Polar residues predominate over residues Ser-347–Pro-369. Phosphothreonine is present on Thr-590. 3 stretches are compositionally biased toward polar residues: residues Ala-599–Pro-609, Val-818–Thr-835, and Leu-887–Ser-905. Ser-822 carries the post-translational modification Phosphoserine. The span at Pro-941–Ser-951 shows a compositional bias: pro residues. A compositionally biased stretch (low complexity) spans Thr-976–Pro-998. A compositionally biased stretch (polar residues) spans Thr-1106–Lys-1122. A phosphoserine mark is found at Ser-1174 and Ser-1177. Over residues Ser-1174–Ser-1195 the composition is skewed to low complexity. Thr-1364 is subject to Phosphothreonine. 2 positions are modified to phosphoserine: Ser-1368 and Ser-1392. Thr-1398 is modified (phosphothreonine). 2 positions are modified to phosphoserine: Ser-1400 and Ser-1423. The segment covering Val-1429 to Val-1440 has biased composition (polar residues). Low complexity predominate over residues Ser-1489–Ser-1504. A Phosphoserine modification is found at Ser-1492. Positions Pro-1609–Pro-1631 are enriched in polar residues. Composition is skewed to low complexity over residues Ala-1636–Lys-1670 and Ser-1714–Ser-1727. Residues Ala-1762–Ala-1772 show a composition bias toward polar residues. Low complexity-rich tracts occupy residues Lys-1806–Pro-1823 and Pro-1892–Ser-1914. The PXLXP motif lies at Pro-1950–Pro-1954. The span at Ala-1973–Ala-1983 shows a compositional bias: pro residues. The span at Ser-2001 to Asp-2014 shows a compositional bias: acidic residues. Ser-2015 carries the phosphoserine; by ILK1 modification. Positions Thr-2016 to Ala-2029 are enriched in low complexity. The required for DNA-binding stretch occupies residues Gln-2041–Met-2052. The region spanning Ser-2042–Ala-2107 is the NAC-A/B domain. Ser-2104 carries the post-translational modification Phosphoserine. An N6-acetyllysine; alternate modification is found at Lys-2114. Residue Lys-2114 forms a Glycyl lysine isopeptide (Lys-Gly) (interchain with G-Cter in SUMO2); alternate linkage. Thr-2131 carries the phosphothreonine; by GSK3-beta modification. A Phosphothreonine modification is found at Thr-2133. Phosphoserine is present on residues Ser-2138, Ser-2158, Ser-2163, and Ser-2175. The region spanning Val-2148–Leu-2185 is the UBA domain.

It belongs to the NAC-alpha family. As to quaternary structure, interacts (via PXLXP motif) with the muscle-restricted histone methyltransferase SMYD1 (via MYND-type zinc finger). Post-translationally, phosphorylation of Ser-2015 by ILK during cell adhesion may promote nuclear localization. Phosphorylation of Thr-2131 by GSK3B may promote proteasome mediated degradation. As to expression, specifically expressed in heart and skeletal muscle: it is present in differentiated myotubes but not in myoblasts.

Its subcellular location is the cytoplasm. It localises to the nucleus. Its function is as follows. Cardiac- and muscle-specific transcription factor. May act to regulate the expression of genes involved in the development of myotubes. Plays a critical role in ventricular cardiomyocyte expansion and regulates postnatal skeletal muscle growth and regeneration. Involved in the organized assembly of thick and thin filaments of myofibril sarcomeres. The chain is Nascent polypeptide-associated complex subunit alpha, muscle-specific form (Naca) from Mus musculus (Mouse).